The sequence spans 94 residues: Integration host factor subunit beta (94 aa).

Belongs to the bacterial histone-like protein family. Heterodimer of an alpha and a beta chain.

This protein is one of the two subunits of integration host factor, a specific DNA-binding protein that functions in genetic recombination as well as in transcriptional and translational control. This Pectobacterium atrosepticum (strain SCRI 1043 / ATCC BAA-672) (Erwinia carotovora subsp. atroseptica) protein is Integration host factor subunit beta.